A 534-amino-acid polypeptide reads, in one-letter code: C-22 sterol desaturase ERG5B (534 aa).

Residues 43 to 61 (IAVTIFAVLIAYDQFMYIW) traverse the membrane as a helical segment. Residue Cys-480 coordinates heme.

It belongs to the cytochrome P450 family. It depends on heme as a cofactor.

The protein resides in the endoplasmic reticulum membrane. It carries out the reaction 5-dehydroepisterol + NADPH + O2 + H(+) = ergosta-5,7,22,24(28)-tetraen-3beta-ol + NADP(+) + 2 H2O. Its pathway is steroid metabolism; ergosterol biosynthesis. C-22 sterol desaturase; part of the third module of ergosterol biosynthesis pathway that includes the late steps of the pathway. ERG5A and ERG5B convert 5-dehydroepisterol into ergosta-5,7,22,24(28)-tetraen-3beta-ol by forming the C-22(23) double bond in the sterol side chain. The third module or late pathway involves the ergosterol synthesis itself through consecutive reactions that mainly occur in the endoplasmic reticulum (ER) membrane. Firstly, the squalene synthase ERG9 catalyzes the condensation of 2 farnesyl pyrophosphate moieties to form squalene, which is the precursor of all steroids. Squalene synthase is crucial for balancing the incorporation of farnesyl diphosphate (FPP) into sterol and nonsterol isoprene synthesis. Secondly, squalene is converted into lanosterol by the consecutive action of the squalene epoxidase ERG1 and the lanosterol synthase ERG7. Then, the delta(24)-sterol C-methyltransferase ERG6 methylates lanosterol at C-24 to produce eburicol. Eburicol is the substrate of the sterol 14-alpha demethylase encoded by CYP51A, CYP51B and CYP51C, to yield 4,4,24-trimethyl ergosta-8,14,24(28)-trienol. CYP51B encodes the enzyme primarily responsible for sterol 14-alpha-demethylation, and plays an essential role in ascospore formation. CYP51A encodes an additional sterol 14-alpha-demethylase, induced on ergosterol depletion and responsible for the intrinsic variation in azole sensitivity. The third CYP51 isoform, CYP51C, does not encode a sterol 14-alpha-demethylase, but is required for full virulence on host wheat ears. The C-14 reductase ERG24 then reduces the C14=C15 double bond which leads to 4,4-dimethylfecosterol. A sequence of further demethylations at C-4, involving the C-4 demethylation complex containing the C-4 methylsterol oxidases ERG25, the sterol-4-alpha-carboxylate 3-dehydrogenase ERG26 and the 3-keto-steroid reductase ERG27, leads to the production of fecosterol via 4-methylfecosterol. ERG28 has a role as a scaffold to help anchor ERG25, ERG26 and ERG27 to the endoplasmic reticulum. The C-8 sterol isomerase ERG2 then catalyzes the reaction which results in unsaturation at C-7 in the B ring of sterols and thus converts fecosterol to episterol. The sterol-C5-desaturases ERG3A and ERG3BB then catalyze the introduction of a C-5 double bond in the B ring to produce 5-dehydroepisterol. The C-22 sterol desaturases ERG5A and ERG5B further convert 5-dehydroepisterol into ergosta-5,7,22,24(28)-tetraen-3beta-ol by forming the C-22(23) double bond in the sterol side chain. Finally, ergosta-5,7,22,24(28)-tetraen-3beta-ol is substrate of the C-24(28) sterol reductase ERG4 to produce ergosterol. This Gibberella zeae (strain ATCC MYA-4620 / CBS 123657 / FGSC 9075 / NRRL 31084 / PH-1) (Wheat head blight fungus) protein is C-22 sterol desaturase ERG5B.